A 346-amino-acid chain; its full sequence is S-adenosylmethionine:tRNA ribosyltransferase-isomerase (346 aa).

This sequence belongs to the QueA family. In terms of assembly, monomer.

The protein resides in the cytoplasm. It carries out the reaction 7-aminomethyl-7-carbaguanosine(34) in tRNA + S-adenosyl-L-methionine = epoxyqueuosine(34) in tRNA + adenine + L-methionine + 2 H(+). The protein operates within tRNA modification; tRNA-queuosine biosynthesis. In terms of biological role, transfers and isomerizes the ribose moiety from AdoMet to the 7-aminomethyl group of 7-deazaguanine (preQ1-tRNA) to give epoxyqueuosine (oQ-tRNA). In Lysinibacillus sphaericus (strain C3-41), this protein is S-adenosylmethionine:tRNA ribosyltransferase-isomerase.